Reading from the N-terminus, the 863-residue chain is uncharacterized protein (863 aa).

The signal sequence occupies residues 1-29 (MHQSGSVSLCRSAISVLVATALYSPIALA). Residues 595 to 863 (GVSYDTAMWS…NTQAGVVWTF (269 aa)) form the Autotransporter domain.

The protein localises to the cell outer membrane. This is an uncharacterized protein from Escherichia coli (strain K12).